The chain runs to 159 residues: Ribosomal RNA large subunit methyltransferase H (159 aa).

S-adenosyl-L-methionine-binding residues include Leu76 and Gly108.

This sequence belongs to the RNA methyltransferase RlmH family. In terms of assembly, homodimer.

It localises to the cytoplasm. It carries out the reaction pseudouridine(1915) in 23S rRNA + S-adenosyl-L-methionine = N(3)-methylpseudouridine(1915) in 23S rRNA + S-adenosyl-L-homocysteine + H(+). Specifically methylates the pseudouridine at position 1915 (m3Psi1915) in 23S rRNA. This is Ribosomal RNA large subunit methyltransferase H from Pediococcus pentosaceus (strain ATCC 25745 / CCUG 21536 / LMG 10740 / 183-1w).